We begin with the raw amino-acid sequence, 392 residues long: MASVEEIRNAQRAKGPATILAIGTATPDHCVYQSDYADYYFRVTKSEHMTALKKKFNRICDKSMIKKRYIHLTEEMLEEHPNIGAYMAPSLNIRQEIITAEVPKLGKEAALKALKEWGQPKSKITHLVFCTTSGVEMPGADYKLANLLGLEPSVRRVMLYHQGCYAGGTVLRTAKDLAENNAGARVLVVCSEITVVTFRGPSEDALDSLVGQALFGDGSAAVIVGSDPDISIERPLFQLVSAAQTFIPNSAGAIAGNLREVGLTFHLWPNVPTLISENIEKCLTQAFDPLGISDWNSLFWIAHPGGPAILDAVEAKLNLDKKKLEATRHVLSEYGNMSSACVLFILDEMRKKSLKGERATTGEGLDWGVLFGFGPGLTIETVVLHSIPMVTN.

55 to 58 (KFNR) contributes to the substrate binding site. The active site involves cysteine 164. Residues leucine 267 and 305–307 (GGP) each bind substrate.

It belongs to the thiolase-like superfamily. Chalcone/stilbene synthases family. In terms of assembly, homodimer.

The protein resides in the cytoplasm. The catalysed reaction is 4-coumaroyl-CoA + 3 malonyl-CoA + 3 H(+) = trans-resveratrol + 4 CO2 + 4 CoA. It functions in the pathway phytoalexin biosynthesis; 3,4',5-trihydroxystilbene biosynthesis; 3,4',5-trihydroxystilbene from trans-4-coumarate: step 2/2. In terms of biological role, mediates resistance to pathogens which are sensitive to stilbenes. The sequence is that of Stilbene synthase 2 from Vitis vinifera (Grape).